The primary structure comprises 100 residues: MAKKSMIERDKKRKFLSAKYSIQRQQLKEQINQSLSLDEKAHLYRKLQSLPRNSAPTRITRRCFVTGRPKAVYRDFGLSRHVLREMAHACLLPGVIKASW.

Belongs to the universal ribosomal protein uS14 family. In terms of assembly, part of the 30S ribosomal subunit.

The protein resides in the plastid. It is found in the chloroplast. Functionally, binds 16S rRNA, required for the assembly of 30S particles. This is Small ribosomal subunit protein uS14c from Staurastrum punctulatum (Green alga).